Consider the following 215-residue polypeptide: Large ribosomal subunit protein bL25 (215 aa).

Residues D170 to K215 are disordered. Composition is skewed to acidic residues over residues T183–E197 and D206–K215.

This sequence belongs to the bacterial ribosomal protein bL25 family. CTC subfamily. Part of the 50S ribosomal subunit; part of the 5S rRNA/L5/L18/L25 subcomplex. Contacts the 5S rRNA. Binds to the 5S rRNA independently of L5 and L18.

Functionally, this is one of the proteins that binds to the 5S RNA in the ribosome where it forms part of the central protuberance. The polypeptide is Large ribosomal subunit protein bL25 (Oceanobacillus iheyensis (strain DSM 14371 / CIP 107618 / JCM 11309 / KCTC 3954 / HTE831)).